The sequence spans 336 residues: Fructose-1,6-bisphosphatase class 1 (336 aa).

Residues Glu-90, Asp-112, Leu-114, and Asp-115 each coordinate Mg(2+). Substrate-binding positions include 115–118 (DGSS), Asn-211, and Lys-277. Glu-283 lines the Mg(2+) pocket.

Belongs to the FBPase class 1 family. As to quaternary structure, homotetramer. Mg(2+) is required as a cofactor.

It localises to the cytoplasm. It carries out the reaction beta-D-fructose 1,6-bisphosphate + H2O = beta-D-fructose 6-phosphate + phosphate. The protein operates within carbohydrate biosynthesis; gluconeogenesis. The sequence is that of Fructose-1,6-bisphosphatase class 1 from Pseudomonas putida (strain GB-1).